The sequence spans 83 residues: U5-theraphotoxin-Hs1a 4 (83 aa).

A signal peptide spans 1-21 (MKTSMFLTLTGLVLLFVDCYA). A propeptide spanning residues 22-49 (SESEEKEFPKELLSSIFAADSDFKVEER) is cleaved from the precursor. Intrachain disulfides connect cysteine 51–cysteine 63, cysteine 56–cysteine 68, and cysteine 62–cysteine 75.

It belongs to the neurotoxin 10 (Hwtx-1) family. 51 (Hntx-8) subfamily. Hntx-8 sub-subfamily. Expressed by the venom gland.

Its subcellular location is the secreted. Its function is as follows. Agglutinates erythrocytes. The sequence is that of U5-theraphotoxin-Hs1a 4 from Cyriopagopus schmidti (Chinese bird spider).